Reading from the N-terminus, the 1295-residue chain is Phosphoribosylformylglycinamidine synthase (1295 aa).

Residues 305-316 (GAATGSGGEIRD), 384-386 (TGY), and A676 each bind ATP. The Mg(2+) site is built by D677, E716, N720, and D884. S886 serves as a coordination point for ATP. The Glutamine amidotransferase type-1 domain occupies 1042–1295 (VAILREQGVN…MFRNARKHLG (254 aa)). C1135 functions as the Nucleophile in the catalytic mechanism. Residues H1260 and E1262 contribute to the active site.

The protein in the N-terminal section; belongs to the FGAMS family. Monomer.

The protein resides in the cytoplasm. It catalyses the reaction N(2)-formyl-N(1)-(5-phospho-beta-D-ribosyl)glycinamide + L-glutamine + ATP + H2O = 2-formamido-N(1)-(5-O-phospho-beta-D-ribosyl)acetamidine + L-glutamate + ADP + phosphate + H(+). It participates in purine metabolism; IMP biosynthesis via de novo pathway; 5-amino-1-(5-phospho-D-ribosyl)imidazole from N(2)-formyl-N(1)-(5-phospho-D-ribosyl)glycinamide: step 1/2. Its function is as follows. Phosphoribosylformylglycinamidine synthase involved in the purines biosynthetic pathway. Catalyzes the ATP-dependent conversion of formylglycinamide ribonucleotide (FGAR) and glutamine to yield formylglycinamidine ribonucleotide (FGAM) and glutamate. This Idiomarina loihiensis (strain ATCC BAA-735 / DSM 15497 / L2-TR) protein is Phosphoribosylformylglycinamidine synthase.